A 689-amino-acid chain; its full sequence is Glycine--tRNA ligase beta subunit (689 aa).

This sequence belongs to the class-II aminoacyl-tRNA synthetase family. In terms of assembly, tetramer of two alpha and two beta subunits.

Its subcellular location is the cytoplasm. The enzyme catalyses tRNA(Gly) + glycine + ATP = glycyl-tRNA(Gly) + AMP + diphosphate. This chain is Glycine--tRNA ligase beta subunit, found in Salmonella schwarzengrund (strain CVM19633).